We begin with the raw amino-acid sequence, 84 residues long: Cell division topological specificity factor (84 aa).

This sequence belongs to the MinE family.

Prevents the cell division inhibition by proteins MinC and MinD at internal division sites while permitting inhibition at polar sites. This ensures cell division at the proper site by restricting the formation of a division septum at the midpoint of the long axis of the cell. In Chromohalobacter salexigens (strain ATCC BAA-138 / DSM 3043 / CIP 106854 / NCIMB 13768 / 1H11), this protein is Cell division topological specificity factor.